The primary structure comprises 93 residues: Pyrimidine/purine nucleoside phosphorylase (93 aa).

This sequence belongs to the nucleoside phosphorylase PpnP family.

The catalysed reaction is a purine D-ribonucleoside + phosphate = a purine nucleobase + alpha-D-ribose 1-phosphate. It catalyses the reaction adenosine + phosphate = alpha-D-ribose 1-phosphate + adenine. It carries out the reaction cytidine + phosphate = cytosine + alpha-D-ribose 1-phosphate. The enzyme catalyses guanosine + phosphate = alpha-D-ribose 1-phosphate + guanine. The catalysed reaction is inosine + phosphate = alpha-D-ribose 1-phosphate + hypoxanthine. It catalyses the reaction thymidine + phosphate = 2-deoxy-alpha-D-ribose 1-phosphate + thymine. It carries out the reaction uridine + phosphate = alpha-D-ribose 1-phosphate + uracil. The enzyme catalyses xanthosine + phosphate = alpha-D-ribose 1-phosphate + xanthine. Its function is as follows. Catalyzes the phosphorolysis of diverse nucleosides, yielding D-ribose 1-phosphate and the respective free bases. Can use uridine, adenosine, guanosine, cytidine, thymidine, inosine and xanthosine as substrates. Also catalyzes the reverse reactions. The polypeptide is Pyrimidine/purine nucleoside phosphorylase (Hahella chejuensis (strain KCTC 2396)).